Reading from the N-terminus, the 848-residue chain is ATP-dependent Clp protease ATP-binding subunit ClpC1 (848 aa).

Residues 2–144 (FERFTDRARK…RQQVIQLLSG (143 aa)) enclose the Clp R domain. Repeat regions lie at residues 5 to 70 (FTDR…IGQG) and 80 to 144 (FTPR…LLSG). Residues 171–418 (LDQFGRNLTA…RMRIRRMTAP (248 aa)) form an i region. An ATP-binding site is contributed by 216 to 223 (GEPGVGKT). Positions 425–460 (DEKIAEARREKESAIDAQDFEKAASLRDREKTLVAQ) constitute a UVR domain. The interval 479-670 (VDDEQIAEVL…VLIFTSNLGT (192 aa)) is II. 553-560 (GPSGVGKT) contacts ATP. The interval 821-848 (TGTRKPPAEPDLAKAGAHSAGGPEPAAR) is disordered.

The protein belongs to the ClpA/ClpB family. ClpC subfamily.

ATP-dependent specificity component of the Clp protease. It directs the protease to specific substrates. Can perform chaperone functions in the absence of ClpP. The chain is ATP-dependent Clp protease ATP-binding subunit ClpC1 (clpC1) from Mycobacterium tuberculosis (strain CDC 1551 / Oshkosh).